The following is a 243-amino-acid chain: Complement C1q tumor necrosis factor-related protein 5 (243 aa).

A signal peptide spans 1 to 15 (MRPLLALLLLGLASG). The tract at residues 15 to 124 (GSPPLDDNKI…VPPPADTPLP (110 aa)) is disordered. One can recognise a Collagen-like domain in the interval 30–95 (GQPGLPGTPG…AGPVGAIGPA (66 aa)). A C1q domain is found at 99-238 (SVPPRSAFSA…GFLVYSDWHS (140 aa)).

As to quaternary structure, homotrimer (via collagen-like domain). May form higher order oligomers by supercoiling of the trimers. May interact with ERFE.

Its subcellular location is the secreted. The protein is Complement C1q tumor necrosis factor-related protein 5 (C1qtnf5) of Rattus norvegicus (Rat).